The following is a 427-amino-acid chain: Sialic acid TRAP transporter large permease protein SiaM (427 aa).

The next 12 helical transmembrane spans lie at 11–31 (LLFA…AFLI), 52–72 (FTLL…SAGI), 82–102 (SLVG…SLLF), 140–160 (ASCI…YGVV), 165–185 (IGAL…ALMV), 214–234 (AFLS…GKFT), 246–266 (ALFL…IEIL), 270–290 (VNTT…GWIV), 301–321 (DYFL…NLLL), 322–342 (LFLG…PFLV), 348–368 (VGID…IGIL), and 394–414 (VLPL…FPQF).

It belongs to the TRAP transporter large permease family. In terms of assembly, the complex comprises the extracytoplasmic solute receptor protein SiaP, and the two transmembrane proteins SiaQ and SiaM. SiaQ and SiaM form a tight 1:1 complex.

It localises to the cell inner membrane. In terms of biological role, part of the tripartite ATP-independent periplasmic (TRAP) transport system SiaPQM that catalyzes unidirectional Na(+)-dependent sialic acid uptake. This Vibrio cholerae serotype O1 (strain ATCC 39315 / El Tor Inaba N16961) protein is Sialic acid TRAP transporter large permease protein SiaM.